The following is a 139-amino-acid chain: Glutamate mutase sigma subunit (139 aa).

The B12-binding domain maps to 4-139 (KIKLVLGVIG…DLHADFPDHA (136 aa)). Adenosylcob(III)alamin-binding positions include 14–18 (SDCHA), histidine 17, 62–64 (SSL), and 94–98 (NIVVG).

It belongs to the methylaspartate mutase GlmS subunit family. As to quaternary structure, heterotetramer composed of 2 epsilon subunits (GlmE) and 2 sigma subunits (GlmS). GlmE exists as a homodimer and GlmS as a monomer. Adenosylcob(III)alamin serves as cofactor.

It carries out the reaction (2S,3S)-3-methyl-L-aspartate = L-glutamate. It functions in the pathway amino-acid degradation; L-glutamate degradation via mesaconate pathway; acetate and pyruvate from L-glutamate: step 1/4. Functionally, catalyzes the carbon skeleton rearrangement of L-glutamate to L-threo-3-methylaspartate ((2S,3S)-3-methylaspartate). The protein is Glutamate mutase sigma subunit of Treponema denticola (strain ATCC 35405 / DSM 14222 / CIP 103919 / JCM 8153 / KCTC 15104).